The chain runs to 117 residues: Large ribosomal subunit protein bL20 (117 aa).

It belongs to the bacterial ribosomal protein bL20 family.

Binds directly to 23S ribosomal RNA and is necessary for the in vitro assembly process of the 50S ribosomal subunit. It is not involved in the protein synthesizing functions of that subunit. The chain is Large ribosomal subunit protein bL20 from Oleidesulfovibrio alaskensis (strain ATCC BAA-1058 / DSM 17464 / G20) (Desulfovibrio alaskensis).